The primary structure comprises 155 residues: Transcriptional repressor NrdR (155 aa).

A zinc finger spans residues Cys3 to Cys34. The region spanning Leu49–Asp139 is the ATP-cone domain.

It belongs to the NrdR family. Requires Zn(2+) as cofactor.

In terms of biological role, negatively regulates transcription of bacterial ribonucleotide reductase nrd genes and operons by binding to NrdR-boxes. The protein is Transcriptional repressor NrdR of Cereibacter sphaeroides (strain ATCC 17025 / ATH 2.4.3) (Rhodobacter sphaeroides).